A 66-amino-acid polypeptide reads, in one-letter code: Toxin Boma6b (66 aa).

An LCN-type CS-alpha/beta domain is found at 2-64; the sequence is RDAYIAQNYN…VPIKVEGKCH (63 aa). 4 disulfides stabilise this stretch: Cys12–Cys63, Cys16–Cys36, Cys22–Cys46, and Cys26–Cys48.

It belongs to the long (4 C-C) scorpion toxin superfamily. Sodium channel inhibitor family. Alpha subfamily. In terms of tissue distribution, expressed by the venom gland.

Its subcellular location is the secreted. Its function is as follows. Alpha toxins bind voltage-independently at site-3 of sodium channels (Nav) and inhibit the inactivation of the activated channels, thereby blocking neuronal transmission. This chain is Toxin Boma6b, found in Buthus occitanus mardochei (Moroccan scorpion).